Here is a 383-residue protein sequence, read N- to C-terminus: MSSATTTDVRKGLYGVIADYTAVSKVMPETNSLTYRGYAVEDLVENCSFEEVFYLLWHGELPTAQQLAEFNERGRSYRSLDAGLISLIHSLPKEAHPMDVMRTAVSYMGTKDSEYFTTDSEHIRKVGHTLLAQLPMVLAMDIRRRKGLDIIAPDSSKSVAENLLSMVFGTGPESPASNPADVRDFEKSLILYAEHSFNASTFTARVITSTKSDVYSAITGAIGALKGPLHGGANEFVMHTMLAIDDPNKAAAWINNALDNKNVVMGFGHRVYKRGDSRVPSMEKSFRELAARHDGEKWVAMYENMRDAMDARTGIKPNLDFPAGPAYHLLGFPVDFFTPLFVIARVAGWTAHIVEQYENNSLIRPLSEYNGEEQREVAPIEKR.

Positions 73 and 195 each coordinate substrate. H230 is an active-site residue. CoA is bound at residue V263 to F267. H269 is an active-site residue. Position 278 (R278) interacts with substrate. D320 is an active-site residue. The substrate site is built by R345 and R364.

This sequence belongs to the citrate synthase family. Homodimer.

The catalysed reaction is propanoyl-CoA + oxaloacetate + H2O = (2S,3S)-2-methylcitrate + CoA + H(+). It catalyses the reaction oxaloacetate + acetyl-CoA + H2O = citrate + CoA + H(+). The protein operates within organic acid metabolism; propanoate degradation. Its pathway is carbohydrate metabolism; tricarboxylic acid cycle; isocitrate from oxaloacetate: step 1/2. Functionally, involved in the catabolism of short chain fatty acids (SCFA) via the tricarboxylic acid (TCA)(acetyl degradation route) and via the 2-methylcitrate cycle I (propionate degradation route). Catalyzes the Claisen condensation of propionyl-CoA and oxaloacetate (OAA) to yield 2-methylcitrate (2-MC) and CoA. Also catalyzes the condensation of oxaloacetate with acetyl-CoA but with a lower specificity. The protein is 2-methylcitrate synthase 2 (prpC2) of Corynebacterium glutamicum (strain ATCC 13032 / DSM 20300 / JCM 1318 / BCRC 11384 / CCUG 27702 / LMG 3730 / NBRC 12168 / NCIMB 10025 / NRRL B-2784 / 534).